Reading from the N-terminus, the 306-residue chain is Acetyl-coenzyme A carboxylase carboxyl transferase subunit beta (306 aa).

A CoA carboxyltransferase N-terminal domain is found at 27-296 (LWHKCPSCEA…PEFVAAPVEP (270 aa)). Zn(2+) contacts are provided by Cys31, Cys34, Cys50, and Cys53. A C4-type zinc finger spans residues 31–53 (CPSCEAVLYRPELEKTLDVCPKC).

The protein belongs to the AccD/PCCB family. Acetyl-CoA carboxylase is a heterohexamer composed of biotin carboxyl carrier protein (AccB), biotin carboxylase (AccC) and two subunits each of ACCase subunit alpha (AccA) and ACCase subunit beta (AccD). Requires Zn(2+) as cofactor.

The protein localises to the cytoplasm. It carries out the reaction N(6)-carboxybiotinyl-L-lysyl-[protein] + acetyl-CoA = N(6)-biotinyl-L-lysyl-[protein] + malonyl-CoA. It participates in lipid metabolism; malonyl-CoA biosynthesis; malonyl-CoA from acetyl-CoA: step 1/1. In terms of biological role, component of the acetyl coenzyme A carboxylase (ACC) complex. Biotin carboxylase (BC) catalyzes the carboxylation of biotin on its carrier protein (BCCP) and then the CO(2) group is transferred by the transcarboxylase to acetyl-CoA to form malonyl-CoA. The chain is Acetyl-coenzyme A carboxylase carboxyl transferase subunit beta from Pseudomonas fluorescens (strain ATCC BAA-477 / NRRL B-23932 / Pf-5).